The following is a 606-amino-acid chain: Chaperone protein DnaK (606 aa).

Thr-174 carries the phosphothreonine; by autocatalysis modification. The tract at residues 578–606 (YTQAGPQGGTNPGGQGGTDGNVNTDYKVY) is disordered. Residues 583-596 (PQGGTNPGGQGGTD) show a composition bias toward gly residues.

Belongs to the heat shock protein 70 family.

Its function is as follows. Acts as a chaperone. This is Chaperone protein DnaK from Caldicellulosiruptor saccharolyticus (strain ATCC 43494 / DSM 8903 / Tp8T 6331).